The sequence spans 346 residues: Uroporphyrinogen decarboxylase (346 aa).

Residues 23-27 (RQAGR), Asp73, Tyr151, Ser206, and His321 each bind substrate.

It belongs to the uroporphyrinogen decarboxylase family. In terms of assembly, homodimer.

It is found in the cytoplasm. It carries out the reaction uroporphyrinogen III + 4 H(+) = coproporphyrinogen III + 4 CO2. The protein operates within porphyrin-containing compound metabolism; protoporphyrin-IX biosynthesis; coproporphyrinogen-III from 5-aminolevulinate: step 4/4. In terms of biological role, catalyzes the decarboxylation of four acetate groups of uroporphyrinogen-III to yield coproporphyrinogen-III. The sequence is that of Uroporphyrinogen decarboxylase from Sulfurovum sp. (strain NBC37-1).